The chain runs to 602 residues: Elongation factor 4 (602 aa).

The region spanning 7–189 is the tr-type G domain; it reads SRIRNFSIIA…SIVQQVPPPA (183 aa). GTP contacts are provided by residues 19 to 24 and 136 to 139; these read DHGKST and NKID.

Belongs to the TRAFAC class translation factor GTPase superfamily. Classic translation factor GTPase family. LepA subfamily.

The protein resides in the cell inner membrane. The enzyme catalyses GTP + H2O = GDP + phosphate + H(+). Required for accurate and efficient protein synthesis under certain stress conditions. May act as a fidelity factor of the translation reaction, by catalyzing a one-codon backward translocation of tRNAs on improperly translocated ribosomes. Back-translocation proceeds from a post-translocation (POST) complex to a pre-translocation (PRE) complex, thus giving elongation factor G a second chance to translocate the tRNAs correctly. Binds to ribosomes in a GTP-dependent manner. In Picosynechococcus sp. (strain ATCC 27264 / PCC 7002 / PR-6) (Agmenellum quadruplicatum), this protein is Elongation factor 4.